The following is a 254-amino-acid chain: MASDLEQLCSYVNEKIENIKKILSLRKLGQDPTLKTTLSKIGDEIITVNELLNQFELEIQYQEQTNSSLKELCKSLEEEFKDVEHLKEHIPSHLPQVTVTQSSTHKPDLDPKESVKAEEPVLPKKPPKEQRVIKEMHFITTDEFSGVPAYMKSRLTYCQINDVIKEINKAVVSKYKIIHQPKASMSSVKRNLYQRFINEETKDTKGRHFIVEADIKEFTTLKVDKKFHVIMNILRHCQRLSEVRGGGLTRYVIT.

Residues 58-90 are a coiled coil; that stretch reads EIQYQEQTNSSLKELCKSLEEEFKDVEHLKEHI. The interval 91-131 is flexiple loop that anchors MAPRE1; the sequence is PSHLPQVTVTQSSTHKPDLDPKESVKAEEPVLPKKPPKEQR. The SXLP motif; mediates interaction with MAPRE1, targeting to microtubule plus ends, stabilization on kinetochores and is required for proper chromosome alignment to the metaphase plate signature appears at 92 to 95; it reads SHLP. The tract at residues 97-127 is disordered; the sequence is VTVTQSSTHKPDLDPKESVKAEEPVLPKKPP. Residues 105 to 127 show a composition bias toward basic and acidic residues; it reads HKPDLDPKESVKAEEPVLPKKPP. The interval 131–254 is binds microtubules and protein phosphatase PP1 subunit PPP1CA; sequence RVIKEMHFIT…GGGLTRYVIT (124 aa). At Thr-156 the chain carries Phosphothreonine. Ser-241 bears the Phosphoserine mark.

The protein belongs to the SKA1 family. As to quaternary structure, component of the SKA complex, composed of SKA1, SKA2 and SKA3. The SKA complex is a homodimer organized around a central W-shaped coiled-coil structure, formed by the interacting domains of SKA1, SKA2, and SKA3, each end of the 'W' is extended further by the C-terminal microtubule-binding domains of SKA1 and SKA3; the complex forms extended structures on microtubules. Interacts (via SXLP motif) with MAPRE1 (via C-terminus); the interaction is direct and stabilizes the kinetochore-microtubule attachment of the SKA1 complex. Interacts (via C-terminus) with protein phosphatase PP1 subunit PPP1CA; the interaction is direct and required for recruitment of PPP1CA to the kinetochore. Interacts with the NDC80 complex; the interaction is required to establish kinetochore-microtubule end-on attachments.

It localises to the cytoplasm. The protein resides in the cytoskeleton. The protein localises to the spindle. It is found in the chromosome. Its subcellular location is the centromere. It localises to the kinetochore. The protein resides in the microtubule organizing center. The protein localises to the centrosome. In terms of biological role, component of the SKA complex, a microtubule plus end-binding complex of the outer kinetochore that stabilizes spindle microtubule-kinetochore attachments, promotes alignment of chromosomes at the mitotic spindle equator (chromosome congression) and assists suppression of the spindle assembly checkpoint. Kinetochores, consisting of a centromere-associated inner segment and a microtubule-contacting outer segment, play a crucial role in chromosome segregation by mediating the physical connection between centromeric DNA and spindle microtubules. The outer kinetochore is made up of the ten-subunit KMN network complex, comprising the MIS12, NDC80 and KNL1 complexes, and auxiliary microtubule-associated components such as the SKA complex; together they connect the outer kinetochore with the inner kinetochore, bind microtubules, and mediate interactions with mitotic checkpoint proteins that delay anaphase until chromosomes are bioriented on the spindle. The SKA complex is loaded onto bioriented kinetochores and it facilitates chromosome congression by stabilizing microtubules together with MAPRE1, and end-on attachment of the NDC80 complex to depolymerizing spindle microtubules, thereby assisting the poleward-moving kinetochore in withstanding microtubule pulling forces. The complex associates with dynamic microtubule plus-ends and can track both depolymerizing and elongating microtubules. The complex recruits protein phosphatase 1 (PP1) to the kinetochore in prometaphase and metaphase, to oppose spindle assembly checkpoint signaling and promote the onset of anaphase. In the complex, it mediates interactions with microtubules. It also stimulates AURKB/Aurora B catalytic activity. During meiosis the SKA complex stabilizes the meiotic spindle and is required for its migration to the cortex. This is SKA complex subunit 1 (Ska1) from Rattus norvegicus (Rat).